The chain runs to 238 residues: uncharacterized protein (238 aa).

A helical transmembrane segment spans residues 10-33; that stretch reads TLLALMISLSLSSLLLLSISHFYV.

The protein resides in the membrane. This is an uncharacterized protein from Haemophilus influenzae (strain ATCC 51907 / DSM 11121 / KW20 / Rd).